A 298-amino-acid polypeptide reads, in one-letter code: Ribonuclease HII (298 aa).

The tract at residues 1–57 (MIREPQKSAKAASKSSAPRARSSVAKATSTKATSSKAASSKAAPSKAGADAGAAKPR) is disordered. A compositionally biased stretch (low complexity) spans 8 to 55 (SAKAASKSSAPRARSSVAKATSTKATSSKAASSKAAPSKAGADAGAAK). In terms of domain architecture, RNase H type-2 spans 85-273 (WPVAGCDEAG…VAAAWRKIEG (189 aa)). Residues aspartate 91, glutamate 92, and aspartate 182 each contribute to the a divalent metal cation site.

Belongs to the RNase HII family. Mn(2+) is required as a cofactor. Requires Mg(2+) as cofactor.

It is found in the cytoplasm. The catalysed reaction is Endonucleolytic cleavage to 5'-phosphomonoester.. Its function is as follows. Endonuclease that specifically degrades the RNA of RNA-DNA hybrids. This is Ribonuclease HII from Rhodopseudomonas palustris (strain BisB5).